Reading from the N-terminus, the 413-residue chain is Monacolin J acid methylbutanoyltransferase (413 aa).

Arginine 73 serves as a coordination point for monacolin J. Serine 76 serves as the catalytic Acyl-ester intermediate. Monacolin J-binding residues include arginine 173, tyrosine 188, and tyrosine 258. Position 366 (glycine 366) interacts with 2-methylbutanoate. Positions 388 and 390 each coordinate monacolin J.

Belongs to the class-A beta-lactamase family. In terms of assembly, interacts with LovF.

The catalysed reaction is monacolin J carboxylate + (S)-2-methylbutanoyl-[2-methylbutanoate polyketide synthase] = lovastatin carboxylate + holo-[2-methylbutanoate polyketide synthase]. The protein operates within polyketide biosynthesis; lovastatin biosynthesis. In terms of biological role, monacolin J acid methylbutanoyltransferase; part of the gene cluster that mediates the biosynthesis of lovastatin (also known as mevinolin, mevacor or monacolin K), a hypolipidemic inhibitor of (3S)-hydroxymethylglutaryl-coenzyme A (HMG-CoA) reductase (HMGR). The first step in the biosynthesis of lovastatin is the production of dihydromonacolin L acid by the lovastatin nonaketide synthase lovB and the trans-acting enoyl reductase lovC via condensation of one acetyl-CoA unit and 8 malonyl-CoA units. Dihydromonacolin L acid is released from lovB by the thioesterase lovG. Next, dihydromonacolin L acid is oxidized by the dihydromonacolin L monooxygenase lovA twice to form monacolin J acid. The 2-methylbutyrate moiety of lovastatin is synthesized by the lovastatin diketide synthase lovF via condensation of one acetyl-CoA unit and one malonyl-CoA unit. Finally, the covalent attachment of this moiety to monacolin J acid is catalyzed by the transesterase lovD to yield lovastatin. LovD has broad substrate specificity and can also convert monacolin J to simvastatin using alpha-dimethylbutanoyl-S-methyl-3-mercaptopropionate (DMB-S-MMP) as the thioester acyl donor, and can also catalyze the reverse reaction and function as hydrolase in vitro. LovD has much higher activity with LovF-bound 2-methylbutanoate than with free diketide substrates. In Aspergillus terreus, this protein is Monacolin J acid methylbutanoyltransferase.